The chain runs to 325 residues: Replication factor C small subunit (325 aa).

47–54 lines the ATP pocket; that stretch reads GPPGTGKT.

The protein belongs to the activator 1 small subunits family. RfcS subfamily. As to quaternary structure, heteromultimer composed of small subunits (RfcS) and large subunits (RfcL).

Its function is as follows. Part of the RFC clamp loader complex which loads the PCNA sliding clamp onto DNA. This is Replication factor C small subunit from Aeropyrum pernix (strain ATCC 700893 / DSM 11879 / JCM 9820 / NBRC 100138 / K1).